A 361-amino-acid chain; its full sequence is Chorismate synthase (361 aa).

Residues R48 and R54 each contribute to the NADP(+) site. FMN contacts are provided by residues 125 to 127 (RSS), 240 to 241 (NA), G286, 301 to 305 (KPTSS), and R327.

Belongs to the chorismate synthase family. As to quaternary structure, homotetramer. It depends on FMNH2 as a cofactor.

It carries out the reaction 5-O-(1-carboxyvinyl)-3-phosphoshikimate = chorismate + phosphate. It functions in the pathway metabolic intermediate biosynthesis; chorismate biosynthesis; chorismate from D-erythrose 4-phosphate and phosphoenolpyruvate: step 7/7. Catalyzes the anti-1,4-elimination of the C-3 phosphate and the C-6 proR hydrogen from 5-enolpyruvylshikimate-3-phosphate (EPSP) to yield chorismate, which is the branch point compound that serves as the starting substrate for the three terminal pathways of aromatic amino acid biosynthesis. This reaction introduces a second double bond into the aromatic ring system. The sequence is that of Chorismate synthase from Magnetococcus marinus (strain ATCC BAA-1437 / JCM 17883 / MC-1).